A 343-amino-acid chain; its full sequence is Uroporphyrinogen decarboxylase (343 aa).

Residues 25–29 (RQAGR), aspartate 75, tyrosine 152, serine 207, and histidine 323 each bind substrate.

The protein belongs to the uroporphyrinogen decarboxylase family. Homodimer.

Its subcellular location is the cytoplasm. It catalyses the reaction uroporphyrinogen III + 4 H(+) = coproporphyrinogen III + 4 CO2. It functions in the pathway porphyrin-containing compound metabolism; protoporphyrin-IX biosynthesis; coproporphyrinogen-III from 5-aminolevulinate: step 4/4. Its function is as follows. Catalyzes the decarboxylation of four acetate groups of uroporphyrinogen-III to yield coproporphyrinogen-III. The protein is Uroporphyrinogen decarboxylase of Jannaschia sp. (strain CCS1).